The primary structure comprises 92 residues: DNA-binding protein HU 1 (92 aa).

At Thr4 the chain carries Phosphothreonine.

Belongs to the bacterial histone-like protein family. As to quaternary structure, homodimer. In terms of assembly, (Microbial infection) Interacts with Bacillus phage SP01 Gp46; the interaction replaces dsDNA from the hbs-DNA complex.

Its subcellular location is the cytoplasm. It localises to the nucleoid. Its function is as follows. Histone-like DNA-binding protein which introduces negative supercoils in relaxed plasmid DNA in the presence of topoisomerase I. There are at least 20,000 monomers/cell. Capable of wrapping DNA to stabilize it, and thus to prevent its denaturation under extreme environmental conditions. Binds evenly across chromosome, does not display a preference for AT content. Binds ss- and dsDNA in a sequence non-specific manner; 8 nucleotides are sufficient to bind protein. This chain is DNA-binding protein HU 1, found in Bacillus subtilis (strain 168).